We begin with the raw amino-acid sequence, 149 residues long: Ribonuclease H (149 aa).

The 142-residue stretch at 5–146 (QRPHVVIFTD…ADELAREGLA (142 aa)) folds into the RNase H type-1 domain. D14, E52, D74, and D138 together coordinate Mg(2+).

It belongs to the RNase H family. Monomer. The cofactor is Mg(2+).

The protein resides in the cytoplasm. The catalysed reaction is Endonucleolytic cleavage to 5'-phosphomonoester.. Its function is as follows. Endonuclease that specifically degrades the RNA of RNA-DNA hybrids. In Afipia carboxidovorans (strain ATCC 49405 / DSM 1227 / KCTC 32145 / OM5) (Oligotropha carboxidovorans), this protein is Ribonuclease H.